Here is a 174-residue protein sequence, read N- to C-terminus: UPF0316 protein LMHCC_0787 (174 aa).

3 helical membrane-spanning segments follow: residues 4-24 (GIFI…IYTV), 36-56 (LAAL…SLVL), and 62-82 (IANV…GMKI).

The protein belongs to the UPF0316 family.

The protein resides in the cell membrane. This is UPF0316 protein LMHCC_0787 from Listeria monocytogenes serotype 4a (strain HCC23).